The sequence spans 291 residues: Trimeric intracellular cation channel type B (291 aa).

The Lumenal segment spans residues 1-16; that stretch reads MEYPWDDLTLAFSRTS. The chain crosses the membrane as a helical span at residues 17 to 33; sequence MFPFFDIAHYLVSVMAL. The Cytoplasmic portion of the chain corresponds to 34 to 47; it reads KQRPGAVAAAWSNP. Residues 48–69 form a helical membrane-spanning segment; that stretch reads LSSWLSAMLHCFGGGILSCILL. The Lumenal portion of the chain corresponds to 70 to 80; sequence AEPPLKFLTNH. The chain crosses the membrane as a helical span at residues 81-99; sequence TNILLASSIWYIVFFCPRD. Over 100–103 the chain is Cytoplasmic; it reads LVSQ. The helical transmembrane segment at 104–122 threads the bilayer; the sequence is GYSYQPIQLLAAGMKEVTR. Residues K118 and R122 each coordinate a 1,2-diacyl-sn-glycero-3-phospho-(1D-myo-inositol-4,5-bisphosphate). Residues 123-138 are Lumenal-facing; sequence TWKIVGGVAHANGYYR. Residues 139 to 156 traverse the membrane as a helical segment; it reads NGWIVMIAVGWARGAGGA. Topologically, residues 157–179 are cytoplasmic; the sequence is IITACEQLLKGDWKPEGDEWLKM. The helical transmembrane segment at 180-197 threads the bilayer; the sequence is SFPCKVTLLGSIMFTFQH. The Lumenal segment spans residues 198–206; that stretch reads TRHLAISKH. The chain crosses the membrane as a helical span at residues 207-225; that stretch reads DLMFLYTIFLVTIKVTMMM. The Cytoplasmic portion of the chain corresponds to 226–291; the sequence is TKDAAVTLTP…SAKRHAKKED (66 aa). The disordered stretch occupies residues 254 to 291; the sequence is LSEKKAEVKPSSNGSASSASKRGTEPPSSAKRHAKKED. Positions 264 to 273 are enriched in low complexity; the sequence is SSNGSASSAS.

This sequence belongs to the TMEM38 family. As to quaternary structure, homotrimer; conformation seems to be controled by binding to diacylglycerol (DAG).

It localises to the endoplasmic reticulum membrane. It catalyses the reaction K(+)(in) = K(+)(out). With respect to regulation, channel activity is activated by increased cytosolic Ca(2+) levels and blocked by luminal high Ca(2+) levels. Functionally, intracellular monovalent cation channel required for maintenance of rapid intracellular calcium release. Acts as a potassium counter-ion channel that functions in synchronization with calcium release from intracellular stores. Activated by increased cytosolic Ca(2+) levels. The chain is Trimeric intracellular cation channel type B (Tmem38b) from Rattus norvegicus (Rat).